Reading from the N-terminus, the 276-residue chain is MAKFRLSLVQFLVSPVKSENLNRACKLIKEAAQKGAQIVALPECFNSPYGTKYFPEYAEKIPGESTERLSQVAKECGIYLIGGSIPEEDSGKLYNTCAVFGPDGTLLVKHRKIHLFDIDVPGKIRFQESETLSPGDSFSVFETPYCKVGVGICYDIRFAELAQLYSKKGCQLLVYPGAFNMTTGPAHWELLQRARALDNQVYVATASPARDEKASYVAWGHSTIVSPWGEVIAKAGSEETVISADIDLEYLAEIREQIPIRRQRRHDLYSVEEKKN.

The 245-residue stretch at 4-248 folds into the CN hydrolase domain; the sequence is FRLSLVQFLV…ETVISADIDL (245 aa). Glu-43 serves as the catalytic Proton acceptor. The active-site Proton donor is Lys-112. The active-site Nucleophile is the Cys-153.

This sequence belongs to the carbon-nitrogen hydrolase superfamily. NIT1/NIT2 family. In terms of assembly, homodimer.

The protein resides in the cytoplasm. The catalysed reaction is 2-oxoglutaramate + H2O = 2-oxoglutarate + NH4(+). It carries out the reaction 2-oxosuccinamate + H2O = oxaloacetate + NH4(+). Has omega-amidase activity. The role of omega-amidase is to remove potentially toxic intermediates by converting 2-oxoglutaramate and 2-oxosuccinamate to biologically useful 2-oxoglutarate and oxaloacetate, respectively. The polypeptide is Omega-amidase NIT2 (nit2) (Xenopus tropicalis (Western clawed frog)).